The primary structure comprises 392 residues: Formate-dependent phosphoribosylglycinamide formyltransferase (392 aa).

N(1)-(5-phospho-beta-D-ribosyl)glycinamide is bound by residues 22-23 (EL) and Glu82. ATP-binding positions include Arg114, Lys155, 160–165 (SSGKGQ), 195–198 (EGVV), and Glu203. An ATP-grasp domain is found at 119–308 (RLAAEELQLP…EFALHVRAFL (190 aa)). Residues Glu267 and Glu279 each coordinate Mg(2+). Residues Asp286, Lys355, and 362–363 (RR) each bind N(1)-(5-phospho-beta-D-ribosyl)glycinamide.

Belongs to the PurK/PurT family. In terms of assembly, homodimer.

The catalysed reaction is N(1)-(5-phospho-beta-D-ribosyl)glycinamide + formate + ATP = N(2)-formyl-N(1)-(5-phospho-beta-D-ribosyl)glycinamide + ADP + phosphate + H(+). It functions in the pathway purine metabolism; IMP biosynthesis via de novo pathway; N(2)-formyl-N(1)-(5-phospho-D-ribosyl)glycinamide from N(1)-(5-phospho-D-ribosyl)glycinamide (formate route): step 1/1. Its function is as follows. Involved in the de novo purine biosynthesis. Catalyzes the transfer of formate to 5-phospho-ribosyl-glycinamide (GAR), producing 5-phospho-ribosyl-N-formylglycinamide (FGAR). Formate is provided by PurU via hydrolysis of 10-formyl-tetrahydrofolate. In Escherichia coli O1:K1 / APEC, this protein is Formate-dependent phosphoribosylglycinamide formyltransferase.